A 366-amino-acid polypeptide reads, in one-letter code: Phospho-2-dehydro-3-deoxyheptonate aldolase (366 aa).

The protein belongs to the class-I DAHP synthase family.

The catalysed reaction is D-erythrose 4-phosphate + phosphoenolpyruvate + H2O = 7-phospho-2-dehydro-3-deoxy-D-arabino-heptonate + phosphate. Its pathway is metabolic intermediate biosynthesis; chorismate biosynthesis; chorismate from D-erythrose 4-phosphate and phosphoenolpyruvate: step 1/7. Functionally, stereospecific condensation of phosphoenolpyruvate (PEP) and D-erythrose-4-phosphate (E4P) giving rise to 3-deoxy-D-arabino-heptulosonate-7-phosphate (DAHP). This chain is Phospho-2-dehydro-3-deoxyheptonate aldolase (aroG), found in Corynebacterium glutamicum (strain ATCC 13032 / DSM 20300 / JCM 1318 / BCRC 11384 / CCUG 27702 / LMG 3730 / NBRC 12168 / NCIMB 10025 / NRRL B-2784 / 534).